Here is a 274-residue protein sequence, read N- to C-terminus: 2,3,4,5-tetrahydropyridine-2,6-dicarboxylate N-succinyltransferase (274 aa).

Arg107 and Asp144 together coordinate substrate.

This sequence belongs to the transferase hexapeptide repeat family. In terms of assembly, homotrimer.

The protein resides in the cytoplasm. It catalyses the reaction (S)-2,3,4,5-tetrahydrodipicolinate + succinyl-CoA + H2O = (S)-2-succinylamino-6-oxoheptanedioate + CoA. The protein operates within amino-acid biosynthesis; L-lysine biosynthesis via DAP pathway; LL-2,6-diaminopimelate from (S)-tetrahydrodipicolinate (succinylase route): step 1/3. The protein is 2,3,4,5-tetrahydropyridine-2,6-dicarboxylate N-succinyltransferase of Cereibacter sphaeroides (strain ATCC 17025 / ATH 2.4.3) (Rhodobacter sphaeroides).